Reading from the N-terminus, the 1255-residue chain is MFPFQPMYPMQPMPYRNPFAAPRRPWFPRTDPFLAMQVQELTRSMANLTFKQRREAPPEGPPAKKPKREAPQKQKGGGQGKKKKNQGKKKAKTGPPNPKAQNGNKKKTNKKPGKRQRMVMKLESDKTFPIMLEGKINGYACVVGGKLFRPMHVEGKIDNDVLAALKTKKASKYDLEYADVPQNMRADTFKYTHEKPQGYYSWHHGAVQYENGRFTVPKGVGAKGDSGRPILDNQGRVVAIVLGGVNEGSRTALSVVMWNEKGVTVKYTPENCEQWSLVTTMCLLANVTFPCAQPPICYDRKPAETLAMLSVNVDNPGYDELLEAAVKCPGRKRRSTEELFKEYKLTRPYMARCIRCAVGSCHSPIAIEAVKSDGHDGYVRLQTSSQYGLDSSGNLKGRTMRYDMHGTIEEIPLHQVSLHTSRPCHIVDGHGYFLLARCPAGDSITMEFKKDAVTHSCSVPYEVKFNPVGRELYTHPPEHGAEQACQVYAHDAQNRGAYVEMHLPGSEVDSSLVSLSGSSVTVTPPAGTSALVECECGGTKISETINTAKQFSQCTKKEQCRAYRLQNDKWVYNSDKLPKAAGATLKGKLHVPFLLADGKCTVPLAPEPMITFGFRSVSLKLHPKNPTYLTTRQLADEPHYTHELISEPVVRNFSVTEKGWEFVWGNHPPKRFWAQETAPGNPHGLPHEVITHYYHRYPMSTILGLSICAAIVTVSIAASTWLLCKSRVSCLTPYRLTPNARMPLCLAVLCCARTARAETTWESLDHLWNNNQQMFWIQLLIPLAALIVVTRLLRCVCCVVPFLVVAGAAGAGAYEHATTMPSQAGIPYNTIVNRAGYAPLPISITPTKIKLIPTVNLEYVTCHYKTGMDSPAIKCCGSQECTPTYRPDEQCKVFTGVYPFMWGGAYCFCDTENTQVSKAYVMKSDDCLADHAEAYKAHTASVQAFLNITVGEHSIVTTVYVNGETPVNFNGVKLTAGPLSTAWTPFDRKIVQYAGEIYNYDFPEYGAGQPGAFGDIQSRTVSSSDLYANTNLVLQRPKAGAIHVPYTQAPSGFEQWKKDKAPSLKFTAPFGCEIYTNPIRAENCAVGSIPLAFDIPDALFTRVSETPTLSAAECTLNECVYSSDFGGIATVKYSASKSGKCAVHVPSGTATLKEAAIELAEQGSATIHFSTANIHPEFRLQICTSYVTCKGDCHPPKDHIVTHPQYHAQTFTAAVSKTAWTWLTSLLGGSAVIIIIGLVLATIVAMYVLTNQKHN.

Residues 1–33 (MFPFQPMYPMQPMPYRNPFAAPRRPWFPRTDPF) form a necessary for nucleocapsid assembly and virus assembly region. The interval 33 to 68 (FLAMQVQELTRSMANLTFKQRREAPPEGPPAKKPKR) is host transcription inhibition. The short motif at 41 to 48 (LTRSMANL) is the Supraphysiological nuclear export signal element. The interval 44–119 (SMANLTFKQR…KKPGKRQRMV (76 aa)) is disordered. Residue asparagine 47 is glycosylated (N-linked (GlcNAc...) asparagine; by host). The short motif at 64-68 (KKPKR) is the Nuclear localization signal element. Positions 80-92 (GKKKKNQGKKKAK) are enriched in basic residues. Positions 91 to 127 (AKTGPPNPKAQNGNKKKTNKKPGKRQRMVMKLESDKT) are binding to the viral RNA. Threonine 93 and threonine 108 each carry phosphothreonine. Residues 104–118 (NKKKTNKKPGKRQRM) are compositionally biased toward basic residues. The segment at 112–126 (PGKRQRMVMKLESDK) is ribosome-binding. Phosphoserine is present on serine 124. A Peptidase S3 domain is found at 126-275 (KTFPIMLEGK…KYTPENCEQW (150 aa)). Residue threonine 127 is modified to Phosphothreonine. Histidine 152 acts as the Charge relay system in catalysis. The tract at residues 168–173 (KKASKY) is interaction with spike glycoprotein E2. Catalysis depends on charge relay system residues aspartate 174 and serine 226. The tract at residues 260 to 264 (EKGVT) is interaction with spike glycoprotein E2. A functions as an uncleaved signal peptide for the precursor of protein E3/E2 region spans residues 276-287 (SLVTTMCLLANV). At 276–701 (SLVTTMCLLA…HYYHRYPMST (426 aa)) the chain is on the extracellular side. 7 disulfide bridges follow: cysteine 282–cysteine 291, cysteine 353–cysteine 457, cysteine 356–cysteine 361, cysteine 424–cysteine 438, cysteine 485–cysteine 600, cysteine 534–cysteine 560, and cysteine 536–cysteine 554. The N-linked (GlcNAc...) asparagine; by host glycan is linked to asparagine 286. Residue asparagine 652 is glycosylated (N-linked (GlcNAc...) asparagine; by host). The helical transmembrane segment at 702–722 (ILGLSICAAIVTVSIAASTWL) threads the bilayer. At 723–757 (LCKSRVSCLTPYRLTPNARMPLCLAVLCCARTARA) the chain is on the cytoplasmic side. The interaction with the capsid protein stretch occupies residues 725 to 729 (KSRVS). 3 S-palmitoyl cysteine; by host lipidation sites follow: cysteine 730, cysteine 750, and cysteine 751. The segment at 730–750 (CLTPYRLTPNARMPLCLAVLC) is transient transmembrane before p62-6K protein processing. An intrachain disulfide couples cysteine 730 to cysteine 751. Over 758-772 (ETTWESLDHLWNNNQ) the chain is Extracellular. A helical membrane pass occupies residues 773–793 (QMFWIQLLIPLAALIVVTRLL). Position 794 (arginine 794) is a topological domain, cytoplasmic. Residues 795–815 (CVCCVVPFLVVAGAAGAGAYE) traverse the membrane as a helical segment. At 816–1225 (HATTMPSQAG…SKTAWTWLTS (410 aa)) the chain is on the extracellular side. Intrachain disulfides connect cysteine 862–cysteine 927, cysteine 875–cysteine 907, cysteine 876–cysteine 909, and cysteine 881–cysteine 891. Residues 897-914 (VYPFMWGGAYCFCDTENT) are E1 fusion peptide loop. 2 N-linked (GlcNAc...) asparagine; by host glycosylation sites follow: asparagine 947 and asparagine 1083. Cystine bridges form between cysteine 1072–cysteine 1084, cysteine 1114–cysteine 1189, cysteine 1119–cysteine 1193, and cysteine 1141–cysteine 1183. A helical transmembrane segment spans residues 1226-1246 (LLGGSAVIIIIGLVLATIVAM). Residues 1247–1255 (YVLTNQKHN) are Cytoplasmic-facing.

In terms of assembly, homodimer. Homomultimer. Interacts with host karyopherin KPNA4; this interaction allows the nuclear import of the viral capsid protein. Interacts with spike glycoprotein E2. Interacts with host IRAK1; the interaction leads to inhibition of IRAK1-dependent signaling. Part of a tetrameric complex composed of host CRM1, host importin alpha/beta dimer and the viral capsid; this complex blocks the receptor-mediated transport through the nuclear pore. Interacts with host phosphatase PPP1CA; this interaction dephosphorylates the capsid protein, which increases its ability to bind to the viral genome. The precursor of protein E3/E2 and E1 form a heterodimer shortly after synthesis. As to quaternary structure, interacts with spike glycoprotein E2. The precursor of protein E3/E2 and E1 form a heterodimer shortly after synthesis. Processing of the precursor of protein E3/E2 into E2 and E3 results in a heterodimer of the spike glycoproteins E2 and E1. Spike at virion surface are constituted of three E2-E1 heterodimers. After target cell attachment and endocytosis, E1 change conformation to form homotrimers. Interacts with 6K protein. Interacts with host LDLRAD3; this interaction mediates viral entry to the host cell. In terms of assembly, interacts with spike glycoprotein E1. Processing of the precursor of protein E3/E2 into E2 and E3 results in a heterodimer of the spike glycoproteins E2 and E1. Spike at virion surface are constituted of a trimer of E2-E1 heterodimers. Interacts with 6K protein. Interacts with host LDLRAD3; this interaction mediates viral entry to the host cell. Oligomer. Interacts with spike glycoprotein E1. Interacts with spike glycoprotein E2. Post-translationally, structural polyprotein: Specific enzymatic cleavages in vivo yield mature proteins. Capsid protein is auto-cleaved during polyprotein translation, unmasking a signal peptide at the N-terminus of the precursor of E3/E2. The remaining polyprotein is then targeted to the host endoplasmic reticulum, where host signal peptidase cleaves it into pE2, 6K and E1 proteins. pE2 is further processed to mature E3 and E2 by host furin in trans-Golgi vesicle. In terms of processing, phosphorylated on serine and threonine residues. Palmitoylated via thioester bonds. These palmitoylations may induce disruption of the C-terminus transmembrane. This would result in the reorientation of E2 C-terminus from lumenal to cytoplasmic side. Post-translationally, N-glycosylated. In terms of processing, palmitoylated via thioester bonds.

It localises to the virion. The protein localises to the host cytoplasm. It is found in the host cell membrane. The protein resides in the host nucleus. Its subcellular location is the virion membrane. It localises to the host Golgi apparatus. The protein localises to the host trans-Golgi network. It is found in the host endoplasmic reticulum. The catalysed reaction is Autocatalytic release of the core protein from the N-terminus of the togavirus structural polyprotein by hydrolysis of a -Trp-|-Ser- bond.. Forms an icosahedral capsid with a T=4 symmetry composed of 240 copies of the capsid protein surrounded by a lipid membrane through which penetrate 80 spikes composed of trimers of E1-E2 heterodimers. The capsid protein binds to the viral RNA genome at a site adjacent to a ribosome binding site for viral genome translation following genome release. Possesses a protease activity that results in its autocatalytic cleavage from the nascent structural protein. Following its self-cleavage, the capsid protein transiently associates with ribosomes, and within several minutes the protein binds to viral RNA and rapidly assembles into icosahedric core particles. The resulting nucleocapsid eventually associates with the cytoplasmic domain of the spike glycoprotein E2 at the cell membrane, leading to budding and formation of mature virions. In case of infection, new virions attach to target cells and after clathrin-mediated endocytosis their membrane fuses with the host endosomal membrane. This leads to the release of the nucleocapsid into the cytoplasm, followed by an uncoating event necessary for the genomic RNA to become accessible. The uncoating might be triggered by the interaction of capsid proteins with ribosomes. Binding of ribosomes would release the genomic RNA since the same region is genomic RNA-binding and ribosome-binding. Specifically inhibits interleukin-1 receptor-associated kinase 1/IRAK1-dependent signaling during viral entry, representing a means by which the alphaviruses may evade innate immune detection and activation prior to viral gene expression. Inhibits host transcription. Forms a tetrameric complex with XPO1/CRM1 and the nuclear import receptor importin. This complex blocks the central channel of host nuclear pores thereby inhibiting the receptor-mediated nuclear transport and thus the host mRNA and rRNA transcription. The inhibition of transcription is linked to a cytopathic effect on the host cell. In terms of biological role, provides the signal sequence for the translocation of the precursor of protein E3/E2 to the host endoplasmic reticulum. Furin-cleaved E3 remains associated with spike glycoprotein E1 and mediates pH protection of the latter during the transport via the secretory pathway. After virion release from the host cell, the assembly protein E3 is gradually released in the extracellular space. Its function is as follows. Plays a role in viral attachment to target host cell, by binding to the cell receptor LDLRAD3. Synthesized as a p62 precursor which is processed by furin at the cell membrane just before virion budding, giving rise to E2-E1 heterodimer. The p62-E1 heterodimer is stable, whereas E2-E1 is unstable and dissociate at low pH. p62 is processed at the last step, presumably to avoid E1 fusion activation before its final export to cell surface. E2 C-terminus contains a transitory transmembrane that would be disrupted by palmitoylation, resulting in reorientation of the C-terminal tail from lumenal to cytoplasmic side. This step is critical since E2 C-terminus is involved in budding by interacting with capsid proteins. This release of E2 C-terminus in cytoplasm occurs lately in protein export, and precludes premature assembly of particles at the endoplasmic reticulum membrane. Functionally, acts as a viroporin that participates in virus glycoprotein processing and transport to the plasma membrane, cell permeabilization and budding of viral particles. Disrupts the calcium homeostasis of the cell, probably at the endoplasmic reticulum level. This leads to cytoplasmic calcium elevation. Because of its lipophilic properties, the 6K protein is postulated to influence the selection of lipids that interact with the transmembrane domains of the glycoproteins, which, in turn, affects the deformability of the bilayer required for the extreme curvature that occurs as budding proceeds. Present in low amount in virions, about 3% compared to viral glycoproteins. Class II viral fusion protein. Fusion activity is inactive as long as E1 is bound to E2 in mature virion. After virus attachment to cell receptor LDLRAD3 and endocytosis, acidification of the endosome induce dissociation of E1/E2 heterodimer and concomitant trimerization of the E1 subunits. This E1 trimer is fusion active, and promotes release of viral nucleocapsid in cytoplasm after endosome and viral membrane fusion. Efficient fusion requires the presence of cholesterol and sphingolipid in the target membrane. The polypeptide is Structural polyprotein (Venezuelan equine encephalitis virus (strain 3880) (VEEV)).